A 231-amino-acid polypeptide reads, in one-letter code: Nitrate reductase [NAD(P)H] (231 aa).

One can recognise an FAD-binding FR-type domain in the interval proline 1–threonine 85. FAD is bound by residues arginine 25–threonine 28, leucine 42–tyrosine 46, phenylalanine 47, leucine 59–serine 61, and threonine 112.

The protein belongs to the nitrate reductase family. Homodimer. Requires FAD as cofactor. The cofactor is heme. It depends on Mo-molybdopterin as a cofactor.

The enzyme catalyses nitrite + NAD(+) + H2O = nitrate + NADH + H(+). The catalysed reaction is nitrite + NADP(+) + H2O = nitrate + NADPH + H(+). Its function is as follows. Nitrate reductase is a key enzyme involved in the first step of nitrate assimilation in plants, fungi and bacteria. The protein is Nitrate reductase [NAD(P)H] (NAR) of Zea mays (Maize).